Consider the following 133-residue polypeptide: Small ribosomal subunit protein uS8c (133 aa).

It belongs to the universal ribosomal protein uS8 family. In terms of assembly, part of the 30S ribosomal subunit.

The protein localises to the plastid. Its subcellular location is the chloroplast. Its function is as follows. One of the primary rRNA binding proteins, it binds directly to 16S rRNA central domain where it helps coordinate assembly of the platform of the 30S subunit. This is Small ribosomal subunit protein uS8c (rps8) from Chlorokybus atmophyticus (Soil alga).